The sequence spans 220 residues: Fructose-6-phosphate aldolase 1 (220 aa).

Lys85 (schiff-base intermediate with substrate) is an active-site residue.

This sequence belongs to the transaldolase family. Type 3A subfamily. As to quaternary structure, homodecamer. Five subunits are arranged as a pentamer, and two ring-like pentamers pack like a donut to form the decamer.

Its subcellular location is the cytoplasm. The enzyme catalyses beta-D-fructose 6-phosphate = dihydroxyacetone + D-glyceraldehyde 3-phosphate. Its activity is regulated as follows. Inhibited by glycerol, inorganic phosphate and arabinose 5-phosphate. Functionally, catalyzes the reversible formation of fructose 6-phosphate from dihydroxyacetone (DHA) and D-glyceraldehyde 3-phosphate via an aldolization reaction. Can utilize several aldehydes as acceptor compounds in vitro, and hydroxyacetone (HA) or 1-hydroxy-butan-2-one as alternative donor substrate. Is also able to catalyze the direct stereoselective self-aldol addition of glycolaldehyde to furnish D-(-)-threose, and cross-aldol reactions of glycolaldehyde to other aldehyde acceptors. Is not able to cleave fructose, fructose 1-phosphate, glucose 6-phosphate, sedoheptulose 1,7-bisphosphate, xylulose 5-phosphate, ribulose 5-phosphate, and fructose 1,6-bisphosphate; cannot use dihydroxyacetone phosphate as donor compound nor D-glyceraldehyde as acceptor. Does not display transaldolase activity. This is Fructose-6-phosphate aldolase 1 (fsaA) from Escherichia coli (strain K12).